The sequence spans 249 residues: DNA polymerase sliding clamp 1 (249 aa).

The protein belongs to the PCNA family. Homotrimer. The subunits circularize to form a toroid; DNA passes through its center. Replication factor C (RFC) is required to load the toroid on the DNA. Interacts with TIP.

Inhibited by interaction with the PCNA inhibitor TIP. In terms of biological role, sliding clamp subunit that acts as a moving platform for DNA processing. Responsible for tethering the catalytic subunit of DNA polymerase and other proteins to DNA during high-speed replication. This chain is DNA polymerase sliding clamp 1, found in Thermococcus kodakarensis (strain ATCC BAA-918 / JCM 12380 / KOD1) (Pyrococcus kodakaraensis (strain KOD1)).